Consider the following 390-residue polypeptide: Mannitol-1-phosphate 5-dehydrogenase (390 aa).

7–18 lines the NAD(+) pocket; that stretch reads AVHFGGGNIGRG. Lys-216 is a catalytic residue.

This sequence belongs to the mannitol dehydrogenase family. In terms of assembly, monomer.

The catalysed reaction is D-mannitol 1-phosphate + NAD(+) = beta-D-fructose 6-phosphate + NADH + H(+). In terms of biological role, catalyzes the NAD(H)-dependent interconversion of D-fructose 6-phosphate and D-mannitol 1-phosphate in the mannitol metabolic pathway. Required for the process of sporulation on senescing leaf material. The sequence is that of Mannitol-1-phosphate 5-dehydrogenase (mpd1) from Phaeosphaeria nodorum (strain SN15 / ATCC MYA-4574 / FGSC 10173) (Glume blotch fungus).